Consider the following 272-residue polypeptide: Hemin import ATP-binding protein HmuV (272 aa).

One can recognise an ABC transporter domain in the interval 2–255; sequence LNADHLHVAR…EPIARCYGFR (254 aa). Position 34-41 (34-41) interacts with ATP; the sequence is GRNGAGKS.

It belongs to the ABC transporter superfamily. Heme (hemin) importer (TC 3.A.1.14.5) family. In terms of assembly, the complex is composed of two ATP-binding proteins (HmuV), two transmembrane proteins (HmuU) and a solute-binding protein (HmuT).

The protein localises to the cell inner membrane. Its function is as follows. Part of the ABC transporter complex HmuTUV involved in hemin import. Responsible for energy coupling to the transport system. The sequence is that of Hemin import ATP-binding protein HmuV from Burkholderia mallei (strain ATCC 23344).